The primary structure comprises 198 residues: MGPEAFLPVALIIGYLFGSIPFGLILTKLAGTQDLRSIGSGNIGATNVLRTGRKGLAAGTLLGDALKGTAAVIISGYLGGPNAAMIAGLGAFLGHLFPVWLKFRGGKGVAVYIGILIGLFWPGAIFFCLVWLATAFAFRYSSVAALVASVLTPIVLWAFGHTALAALFALLTLLLIYMHRENIRRLQAGTEGKIGAKK.

Transmembrane regions (helical) follow at residues phenylalanine 6–leucine 26, glycine 55–serine 75, alanine 83–phenylalanine 103, isoleucine 113–alanine 133, and isoleucine 154–leucine 174.

It belongs to the PlsY family. As to quaternary structure, probably interacts with PlsX.

Its subcellular location is the cell inner membrane. The catalysed reaction is an acyl phosphate + sn-glycerol 3-phosphate = a 1-acyl-sn-glycero-3-phosphate + phosphate. It functions in the pathway lipid metabolism; phospholipid metabolism. In terms of biological role, catalyzes the transfer of an acyl group from acyl-phosphate (acyl-PO(4)) to glycerol-3-phosphate (G3P) to form lysophosphatidic acid (LPA). This enzyme utilizes acyl-phosphate as fatty acyl donor, but not acyl-CoA or acyl-ACP. The polypeptide is Glycerol-3-phosphate acyltransferase (Bradyrhizobium sp. (strain BTAi1 / ATCC BAA-1182)).